The sequence spans 237 residues: MIREYFRLHQTIATIVARSQEHIEIAKSAIIDSRTQLEEFIAFDPLFQLTLVPYDLPVDNAPPIVKRMCHASSLFHVGPMAAVAGAIAAFAVEAMVEAGADYAVVDNGGDIAIFSDEPLLVGIYAGSSPIKNLALEIHPTGGILGVCSSSGTIGPSISFGCADVATVISRDPAIADAGATALGNAVTPDASLKECFSVVDRDEVIGALIIRGDEMAVWGEVPPIRRARVKYDLITKG.

It belongs to the UPF0280 family.

This chain is UPF0280 protein Mthe_1297, found in Methanothrix thermoacetophila (strain DSM 6194 / JCM 14653 / NBRC 101360 / PT) (Methanosaeta thermophila).